Reading from the N-terminus, the 134-residue chain is Complexin-1 (134 aa).

Disordered stretches follow at residues 1-60 (MEFV…AERE) and 74-114 (KKEE…EEDE). A compositionally biased stretch (basic and acidic residues) spans 15–60 (DMGKMLGGDEEKDPDAAKKEEERQEALRQAEEERKAKYAKMEAERE). Residues 29-64 (DAAKKEEERQEALRQAEEERKAKYAKMEAEREVMRQ) adopt a coiled-coil conformation. Positions 48-70 (RKAKYAKMEAEREVMRQGIRDKY) are interaction with the SNARE complex.

The protein belongs to the complexin/synaphin family. In terms of assembly, binds to the SNARE core complex containing SNAP25, VAMP2 and STX1A. As to expression, nervous system, and pancreatic islet cells. Present in many brain regions, including hippocampus and cerebellum. In the retina, present at conventional amacrine cell synapses (at protein level).

The protein resides in the cytoplasm. The protein localises to the cytosol. It is found in the perikaryon. It localises to the presynapse. Its function is as follows. Positively regulates a late step in exocytosis of various cytoplasmic vesicles, such as synaptic vesicles and other secretory vesicles. Organizes the SNAREs into a cross-linked zigzag topology that, when interposed between the vesicle and plasma membranes, is incompatible with fusion, thereby preventing SNAREs from releasing neurotransmitters until an action potential arrives at the synapse. Also involved in glucose-induced secretion of insulin by pancreatic beta-cells. Essential for motor behavior. In Mus musculus (Mouse), this protein is Complexin-1 (Cplx1).